Consider the following 486-residue polypeptide: Differentially expressed in FDCP 8 homolog (486 aa).

Residues 1-26 form a disordered region; that stretch reads MSSWCSSEDAHNQSSTPSTRSRKSSW. 2 Phorbol-ester/DAG-type zinc fingers span residues 160–212 and 393–459; these read GHEF…KRVC and IHTV…SLNC.

Belongs to the DEF8 family.

The polypeptide is Differentially expressed in FDCP 8 homolog (Caenorhabditis elegans).